A 513-amino-acid polypeptide reads, in one-letter code: MSLAWRNLQKPFYLETSLRILQMRPSLSLGASRIAVPKLTLHTKHSMPPCDFSPEKYQSLAYSRVLAIHKQHLSPVDTAYFRKPLLLHQGHMEWLFDSEGNRYLDFFSGIVTVSVGHCHPKVSAVAKKQIDRLWHTSSVFFHSPMHEYAEKLSALLPEPLKVIFLVNSGSEANDLAMVMARAHSNHTDIISFRGAYHGCSPYTLGLTNVGIYKMEVPGGIGCQSTMCPDVFRGPWGGIHCRDSPVQTVRDCSCAPDCCQAKERYIEQFKDTLNTSVATSIAGFFAEPIQGVNGVVQYPKEFLKEAFALVRERGGVCIADEVQTGFGRLGSHFWGFQTHDVLPDIVTMAKGIGNGFPMAAVVTTPEIAKSLAKRLLHFSTFGGNPLACAIGSAVLEVIEEENLQRNSQEVGTYMLLKFAKLRDEFDIVGDVRGKGLMVGIEMVQDKISRQPLPKTEVNQIHEDCKDMGLLVGRGGNFSQTFRIVPPMCVTKMEVDFAYEVFRAALIQHMERRAK.

The N-terminal 40 residues, 1-40 (MSLAWRNLQKPFYLETSLRILQMRPSLSLGASRIAVPKLT), are a transit peptide targeting the mitochondrion. Lys56 carries the post-translational modification N6-acetyllysine. Position 70 is an N6-acetyllysine; alternate (Lys70). Lys70 is modified (N6-succinyllysine; alternate). The residue at position 83 (Lys83) is an N6-acetyllysine. Lys261 is subject to N6-acetyllysine; alternate. Lys261 carries the post-translational modification N6-succinyllysine; alternate. The residue at position 303 (Lys303) is an N6-succinyllysine. Residue Lys349 is modified to N6-(pyridoxal phosphate)lysine. Residues Lys416 and Lys419 each carry the N6-acetyllysine; alternate modification. An N6-succinyllysine; alternate mark is found at Lys416 and Lys419. Position 453 is an N6-acetyllysine (Lys453).

This sequence belongs to the class-III pyridoxal-phosphate-dependent aminotransferase family. In terms of assembly, homotetramer. Requires pyridoxal 5'-phosphate as cofactor. In terms of tissue distribution, expressed in the liver and kidney.

The protein localises to the mitochondrion. It catalyses the reaction glyoxylate + L-alanine = glycine + pyruvate. The enzyme catalyses (R)-3-amino-2-methylpropanoate + pyruvate = 2-methyl-3-oxopropanoate + L-alanine. The catalysed reaction is 3-oxopropanoate + L-alanine = beta-alanine + pyruvate. It carries out the reaction 2-oxobutanoate + L-alanine = (2S)-2-aminobutanoate + pyruvate. It catalyses the reaction N(omega),N(omega)-dimethyl-L-arginine + pyruvate = 5-(3,3-dimethylguanidino)-2-oxopentanoate + L-alanine. The enzyme catalyses N(omega),N('omega)-dimethyl-L-arginine + pyruvate = 5-(3,3'-dimethylguanidino)-2-oxopentanoate + L-alanine. The catalysed reaction is N(omega),N(omega)-dimethyl-L-arginine + glyoxylate = 5-(3,3-dimethylguanidino)-2-oxopentanoate + glycine. It carries out the reaction N(omega),N('omega)-dimethyl-L-arginine + glyoxylate = 5-(3,3'-dimethylguanidino)-2-oxopentanoate + glycine. It catalyses the reaction N(omega)-methyl-L-arginine + pyruvate = 5-(3-methylguanidino)-2-oxopentanoate + L-alanine. The enzyme catalyses N(omega)-methyl-L-arginine + glyoxylate = 5-(3-methylguanidino)-2-oxopentanoate + glycine. The catalysed reaction is L-ornithine + pyruvate = 5-amino-2-oxopentanoate + L-alanine. It carries out the reaction L-ornithine + glyoxylate = 5-amino-2-oxopentanoate + glycine. It catalyses the reaction (2S)-2-aminobutanoate + glyoxylate = 2-oxobutanoate + glycine. The enzyme catalyses N(omega),N(omega)-dimethyl-L-arginine + oxaloacetate = 5-(3,3-dimethylguanidino)-2-oxopentanoate + L-aspartate. The catalysed reaction is oxaloacetate + L-alanine = L-aspartate + pyruvate. It carries out the reaction N(omega),N(omega)-dimethyl-L-arginine + 2-oxobutanoate = 5-(3,3-dimethylguanidino)-2-oxopentanoate + (2S)-2-aminobutanoate. It catalyses the reaction 2-oxopentanoate + N(omega),N(omega)-dimethyl-L-arginine = 5-(3,3-dimethylguanidino)-2-oxopentanoate + L-2-aminopentanoate. The enzyme catalyses 2-oxohexanoate + N(omega),N(omega)-dimethyl-L-arginine = L-2-aminohexanoate + 5-(3,3-dimethylguanidino)-2-oxopentanoate. (R)-3-amino-2-methylpropionate--pyruvate transaminase and beta-alanine-pyruvate aminotransferase are inhibited by aminooxyacetic acid. Multifunctional aminotransferase with a broad substrate specificity. Catalyzes the conversion of glyoxylate to glycine using alanine as the amino donor. Catalyzes metabolism of not L- but the D-isomer of D-beta-aminoisobutyric acid to generate 2-methyl-3-oxopropanoate and alanine. Catalyzes the transfer of the amino group from beta-alanine to pyruvate to yield L-alanine and 3-oxopropanoate. Can metabolize NG-monomethyl-L-arginine (NMMA), asymmetric NG,NG-dimethyl-L-arginine (ADMA) and symmetric NG,N'G-dimethyl-L-arginine (SDMA). ADMA is a potent inhibitor of nitric-oxide (NO) synthase, and this activity provides mechanism through which the kidney regulates blood pressure. The polypeptide is Alanine--glyoxylate aminotransferase 2, mitochondrial (Agxt2) (Mus musculus (Mouse)).